Consider the following 691-residue polypeptide: Protein-glutamine gamma-glutamyltransferase E (691 aa).

Tyr-110 carries the post-translational modification Phosphotyrosine. Thr-111 is modified (phosphothreonine). 4 residues coordinate Ca(2+): Ala-221, Asn-224, Asn-226, and Asp-227. Residue Cys-272 is part of the active site. Ca(2+)-binding residues include Asp-301, Asp-303, Asn-305, Ser-307, and Asp-324. Residues His-330 and Asp-353 contribute to the active site. Ca(2+)-binding residues include Asn-393, Thr-414, Glu-442, and Glu-447.

It belongs to the transglutaminase superfamily. Transglutaminase family. In terms of assembly, consists of two polypeptide chains, which are synthesized as a precursor form of a single polypeptide. Ca(2+) is required as a cofactor. Post-translationally, activated by proteolytic processing. In vitro activation is commonly achieved by cleavage with dispase, a neutral bacterial protease. Physiological activation may be catalyzed by CTSL and, to a lesser extent, by CTSS.

It localises to the cytoplasm. The catalysed reaction is L-glutaminyl-[protein] + L-lysyl-[protein] = [protein]-L-lysyl-N(6)-5-L-glutamyl-[protein] + NH4(+). Catalyzes the calcium-dependent formation of isopeptide cross-links between glutamine and lysine residues in various proteins, as well as the conjugation of polyamines to proteins. Involved in the formation of the cornified envelope (CE), a specialized component consisting of covalent cross-links of proteins beneath the plasma membrane of terminally differentiated keratinocytes. Catalyzes small proline-rich proteins and LOR cross-linking to form small interchain oligomers, which are further cross-linked by TGM1 onto the growing CE scaffold. In hair follicles, involved in cross-linking structural proteins to hardening the inner root sheath. This chain is Protein-glutamine gamma-glutamyltransferase E (TGM3), found in Bos taurus (Bovine).